Reading from the N-terminus, the 466-residue chain is Glutamate--tRNA ligase (466 aa).

Residues 9-19 (PSPTGDLHVGS) carry the 'HIGH' region motif. The short motif at 237 to 241 (KLSKR) is the 'KMSKS' region element. Lys-240 lines the ATP pocket.

It belongs to the class-I aminoacyl-tRNA synthetase family. Glutamate--tRNA ligase type 1 subfamily. In terms of assembly, monomer.

It localises to the cytoplasm. It catalyses the reaction tRNA(Glu) + L-glutamate + ATP = L-glutamyl-tRNA(Glu) + AMP + diphosphate. Catalyzes the attachment of glutamate to tRNA(Glu) in a two-step reaction: glutamate is first activated by ATP to form Glu-AMP and then transferred to the acceptor end of tRNA(Glu). This chain is Glutamate--tRNA ligase, found in Baumannia cicadellinicola subsp. Homalodisca coagulata.